A 374-amino-acid polypeptide reads, in one-letter code: 3-dehydroquinate synthase (374 aa).

This sequence belongs to the archaeal-type DHQ synthase family.

The enzyme catalyses 2-amino-2,3,7-trideoxy-D-lyxo-hept-6-ulosonate + NAD(+) + H2O = 3-dehydroquinate + NH4(+) + NADH + H(+). Catalyzes the oxidative deamination and cyclization of 2-amino-3,7-dideoxy-D-threo-hept-6-ulosonic acid (ADH) to yield 3-dehydroquinate (DHQ), which is fed into the canonical shikimic pathway of aromatic amino acid biosynthesis. The chain is 3-dehydroquinate synthase from Methanocella arvoryzae (strain DSM 22066 / NBRC 105507 / MRE50).